The following is a 358-amino-acid chain: Fructose-bisphosphate aldolase (358 aa).

A D-glyceraldehyde 3-phosphate-binding site is contributed by Ser61. The active-site Proton donor is the Asp108. Residues His109, Asp143, Glu173, and His225 each contribute to the Zn(2+) site. Gly226 contacts dihydroxyacetone phosphate. His264 contributes to the Zn(2+) binding site. Residues 265–267 (GGS) and 286–289 (NIDT) each bind dihydroxyacetone phosphate. Phosphothreonine is present on residues Thr289, Thr312, Thr340, and Thr342.

The protein belongs to the class II fructose-bisphosphate aldolase family. Homodimer. The cofactor is Zn(2+).

It catalyses the reaction beta-D-fructose 1,6-bisphosphate = D-glyceraldehyde 3-phosphate + dihydroxyacetone phosphate. It participates in carbohydrate degradation; glycolysis; D-glyceraldehyde 3-phosphate and glycerone phosphate from D-glucose: step 4/4. Functionally, catalyzes the aldol condensation of dihydroxyacetone phosphate (DHAP or glycerone-phosphate) with glyceraldehyde 3-phosphate (G3P) to form fructose 1,6-bisphosphate (FBP) in gluconeogenesis and the reverse reaction in glycolysis. The sequence is that of Fructose-bisphosphate aldolase (fba1) from Schizosaccharomyces pombe (strain 972 / ATCC 24843) (Fission yeast).